Reading from the N-terminus, the 157-residue chain is 6,7-dimethyl-8-ribityllumazine synthase (157 aa).

5-amino-6-(D-ribitylamino)uracil-binding positions include Phe-22, 57 to 59, and 81 to 83; these read AYE and TVI. Residue 86-87 participates in (2S)-2-hydroxy-3-oxobutyl phosphate binding; that stretch reads GT. His-89 functions as the Proton donor in the catalytic mechanism. Phe-114 is a binding site for 5-amino-6-(D-ribitylamino)uracil. Residue Arg-128 coordinates (2S)-2-hydroxy-3-oxobutyl phosphate.

It belongs to the DMRL synthase family. Forms an icosahedral capsid composed of 60 subunits, arranged as a dodecamer of pentamers.

The enzyme catalyses (2S)-2-hydroxy-3-oxobutyl phosphate + 5-amino-6-(D-ribitylamino)uracil = 6,7-dimethyl-8-(1-D-ribityl)lumazine + phosphate + 2 H2O + H(+). It participates in cofactor biosynthesis; riboflavin biosynthesis; riboflavin from 2-hydroxy-3-oxobutyl phosphate and 5-amino-6-(D-ribitylamino)uracil: step 1/2. Functionally, catalyzes the formation of 6,7-dimethyl-8-ribityllumazine by condensation of 5-amino-6-(D-ribitylamino)uracil with 3,4-dihydroxy-2-butanone 4-phosphate. This is the penultimate step in the biosynthesis of riboflavin. This is 6,7-dimethyl-8-ribityllumazine synthase from Pasteurella multocida (strain Pm70).